A 329-amino-acid polypeptide reads, in one-letter code: Biotin synthase (329 aa).

A Radical SAM core domain is found at 48–278 (FVGDKVFLCS…TKRISICGGR (231 aa)). Cys66, Cys70, and Cys73 together coordinate [4Fe-4S] cluster. 2 residues coordinate [2Fe-2S] cluster: Ser143 and Cys203.

This sequence belongs to the radical SAM superfamily. Biotin synthase family. Homodimer. Requires [4Fe-4S] cluster as cofactor. The cofactor is [2Fe-2S] cluster.

The enzyme catalyses (4R,5S)-dethiobiotin + (sulfur carrier)-SH + 2 reduced [2Fe-2S]-[ferredoxin] + 2 S-adenosyl-L-methionine = (sulfur carrier)-H + biotin + 2 5'-deoxyadenosine + 2 L-methionine + 2 oxidized [2Fe-2S]-[ferredoxin]. The protein operates within cofactor biosynthesis; biotin biosynthesis; biotin from 7,8-diaminononanoate: step 2/2. Its function is as follows. Catalyzes the conversion of dethiobiotin (DTB) to biotin by the insertion of a sulfur atom into dethiobiotin via a radical-based mechanism. The chain is Biotin synthase from Geotalea daltonii (strain DSM 22248 / JCM 15807 / FRC-32) (Geobacter daltonii).